Here is a 241-residue protein sequence, read N- to C-terminus: MDYFSIIKITMITEIYFQYVIYILCFGVLLLLKSESDRLLWLHLVSILVGLIANYEMKFNVLFAMFHSAVHNLWPFLKNTGYDNTEKSVYDVICHTIMVVICYHQICYTENAVTNNYYTFHLFSVMIIIGALFNCVVSGKAIGSNDRFLHSLFEYTTIFQALSTGYWVATMLWYHHLDNIHFYSHWIIWIGLMTINWFVYKFYPNLVGISMRYKYVEAVFIVCTWYSGIISSPLIKYINVY.

7 helical membrane passes run Ile12–Leu32, Leu39–Phe59, Val89–Thr109, Tyr117–Val137, Leu152–Leu172, Ile180–Tyr200, and Tyr215–Ile235.

It belongs to the mimivirus L68/R809 family.

The protein resides in the membrane. This is an uncharacterized protein from Acanthamoeba polyphaga mimivirus (APMV).